Here is a 65-residue protein sequence, read N- to C-terminus: MAKKATKTITVEQIGSPIRRPKEQRATLVGLGLNKMHKQRTLEDTPSVRGMIAAVQHLVRVVDEG.

This sequence belongs to the universal ribosomal protein uL30 family. In terms of assembly, part of the 50S ribosomal subunit.

The polypeptide is Large ribosomal subunit protein uL30 (Mesorhizobium japonicum (strain LMG 29417 / CECT 9101 / MAFF 303099) (Mesorhizobium loti (strain MAFF 303099))).